The following is an 80-amino-acid chain: Large ribosomal subunit protein bL31B (80 aa).

The protein belongs to the bacterial ribosomal protein bL31 family. Type B subfamily. Part of the 50S ribosomal subunit.

The protein is Large ribosomal subunit protein bL31B of Xanthomonas axonopodis pv. citri (strain 306).